The chain runs to 341 residues: GDT1-like protein 1, chloroplastic (341 aa).

Residues 1–13 are compositionally biased toward low complexity; the sequence is MASVASSTVFASS. Disordered stretches follow at residues 1-41 and 54-76; these read MASV…GRSV and VVTRASDEEGPPEPAGQGRGGGR. Residues 1–57 constitute a chloroplast transit peptide; that stretch reads MASVASSTVFASSLPHHRATTRAPPTPPRIPRRARLPGRSVVSCLPKRGSEKLVVTR. 7 helical membrane-spanning segments follow: residues 79–99, 117–137, 158–178, 203–223, 246–266, 286–306, and 318–338; these read PSLDASSCGLALAAAAGVLML, VVGDLGDISTGFASAFLLIFF, AIIFLGTFGALAVMTIISVVL, FLAACLLVYYGVTTLLDAASG, GAGIISAASTIASTFVLVFIA, LGVIAGSLAGHAVATLIAVLG, and IVAYIGGSLFLAFAAVTLVEI.

The protein belongs to the GDT1 family.

The protein resides in the plastid. Its subcellular location is the chloroplast membrane. In Oryza sativa subsp. indica (Rice), this protein is GDT1-like protein 1, chloroplastic.